A 122-amino-acid chain; its full sequence is Ribosome-binding factor A (122 aa).

The protein belongs to the RbfA family. Monomer. Binds 30S ribosomal subunits, but not 50S ribosomal subunits or 70S ribosomes.

Its subcellular location is the cytoplasm. Functionally, one of several proteins that assist in the late maturation steps of the functional core of the 30S ribosomal subunit. Associates with free 30S ribosomal subunits (but not with 30S subunits that are part of 70S ribosomes or polysomes). Required for efficient processing of 16S rRNA. May interact with the 5'-terminal helix region of 16S rRNA. The polypeptide is Ribosome-binding factor A (Anaeromyxobacter sp. (strain Fw109-5)).